Reading from the N-terminus, the 175-residue chain is DDB1- and CUL4-associated factor 16 (175 aa).

The segment at 1-42 (MGPRNPSPDPLSESESEEEENTNYLNESSGEEWDSSEEEDPV) is disordered. Composition is skewed to acidic residues over residues 12–21 (SESESEEEEN) and 29–41 (SGEE…EEDP). K61 carries the post-translational modification N6-acetyllysine.

In terms of assembly, interacts with DDB1 and CUL4A.

It is found in the nucleus. The protein operates within protein modification; protein ubiquitination. In terms of biological role, functions as a substrate recognition component for CUL4-DDB1 E3 ubiquitin-protein ligase complex, which mediates ubiquitination and proteasome-dependent degradation of nuclear proteins. This chain is DDB1- and CUL4-associated factor 16 (DCAF16), found in Bos taurus (Bovine).